The primary structure comprises 470 residues: 6-phospho-beta-galactosidase 1 (470 aa).

D-galactose 6-phosphate-binding residues include glutamine 23, histidine 120, asparagine 163, glutamate 164, and asparagine 300. Glutamate 164 functions as the Proton donor in the catalytic mechanism. Glutamate 378 serves as the catalytic Nucleophile. Residues serine 434, tryptophan 435, lysine 441, and tyrosine 443 each coordinate D-galactose 6-phosphate.

Belongs to the glycosyl hydrolase 1 family.

The enzyme catalyses a 6-phospho-beta-D-galactoside + H2O = D-galactose 6-phosphate + an alcohol. It participates in carbohydrate metabolism; lactose degradation; D-galactose 6-phosphate and beta-D-glucose from lactose 6-phosphate: step 1/1. The protein is 6-phospho-beta-galactosidase 1 of Streptococcus pneumoniae serotype 4 (strain ATCC BAA-334 / TIGR4).